A 420-amino-acid chain; its full sequence is Histidine--tRNA ligase (420 aa).

It belongs to the class-II aminoacyl-tRNA synthetase family. As to quaternary structure, homodimer.

The protein resides in the cytoplasm. It carries out the reaction tRNA(His) + L-histidine + ATP = L-histidyl-tRNA(His) + AMP + diphosphate + H(+). This chain is Histidine--tRNA ligase, found in Staphylococcus aureus (strain Mu3 / ATCC 700698).